We begin with the raw amino-acid sequence, 306 residues long: uncharacterized protein (306 aa).

Transmembrane regions (helical) follow at residues 13–33, 53–73, 86–106, 112–132, 147–167, 177–197, 214–234, 246–268, and 272–294; these read VLLS…FAFI, PLPM…FAWG, ITGL…IWAA, VGLT…IVPL, WGMM…GMLF, AFVS…VIAI, AGIA…AWLI, VSLI…VTFF, and VAVP…GYML.

Its subcellular location is the cell membrane. This is an uncharacterized protein from Bacillus subtilis (strain 168).